The following is a 344-amino-acid chain: N-acetyl-gamma-glutamyl-phosphate reductase (344 aa).

Residue Cys-150 is part of the active site.

The protein belongs to the NAGSA dehydrogenase family. Type 1 subfamily.

Its subcellular location is the cytoplasm. It catalyses the reaction N-acetyl-L-glutamate 5-semialdehyde + phosphate + NADP(+) = N-acetyl-L-glutamyl 5-phosphate + NADPH + H(+). The protein operates within amino-acid biosynthesis; L-arginine biosynthesis; N(2)-acetyl-L-ornithine from L-glutamate: step 3/4. Catalyzes the NADPH-dependent reduction of N-acetyl-5-glutamyl phosphate to yield N-acetyl-L-glutamate 5-semialdehyde. In Pseudomonas syringae pv. syringae (strain B728a), this protein is N-acetyl-gamma-glutamyl-phosphate reductase.